The primary structure comprises 629 residues: tRNA uridine 5-carboxymethylaminomethyl modification enzyme MnmG (629 aa).

Residues 13 to 18 (GGGHAG), Val-125, and Ser-180 each bind FAD. 273-287 (GPRYCPSIEDKVMRF) provides a ligand contact to NAD(+). Gln-370 contributes to the FAD binding site.

It belongs to the MnmG family. Homodimer. Heterotetramer of two MnmE and two MnmG subunits. Requires FAD as cofactor.

The protein resides in the cytoplasm. NAD-binding protein involved in the addition of a carboxymethylaminomethyl (cmnm) group at the wobble position (U34) of certain tRNAs, forming tRNA-cmnm(5)s(2)U34. This chain is tRNA uridine 5-carboxymethylaminomethyl modification enzyme MnmG, found in Serratia proteamaculans (strain 568).